The sequence spans 382 residues: Mannitol-1-phosphate 5-dehydrogenase (382 aa).

An NAD(+)-binding site is contributed by 3–14 (ALHFGAGNIGRG). Lys-269 bears the N6-acetyllysine mark.

The protein belongs to the mannitol dehydrogenase family.

The catalysed reaction is D-mannitol 1-phosphate + NAD(+) = beta-D-fructose 6-phosphate + NADH + H(+). The polypeptide is Mannitol-1-phosphate 5-dehydrogenase (Escherichia coli O7:K1 (strain IAI39 / ExPEC)).